Reading from the N-terminus, the 1302-residue chain is MPEALILPGMADAEPDLSTFENKTGLAEDMKFLASMPELCDVTFLVGDTREPVCAVKAVLASRSRVFAKMLYAAPSPQRKRETSTKENKLRLFLKRSSEPLLNLQNAAQQRTGYTQQLAPIPEPSGQQHQTLIIEEFEPDVFRQLIEYIHTGCVTLQPRTLLGVMNAADYYGLEELRRACAGFVQCCINVDTVCALLASAERYIQYKCTKTLVQKVLEFVDEHGTEVLNLGSFTLLPQHVVRLILAREELRADEFTKFQAALMWSKKYYDNNPNIDIKEILGTFCEYIQFHKIPANVLMREIHPLNLVPYAIIMNALAYQADPESIDPGKLSPNSSRQHHRHRHHHQSLPKIRKAKSQSFRTRRSPSERRSPNNAPNLTLNTSLTSGNGEKKRSPLTPKSPVMPVPESKSPGSSSQKTPTSLSRQGTLRASNRRKNSGQLSISLGTQGRRSPVGLNDRSPQGRRSPLFPSSGLRSPNDPMTSPTVRSPTGEPRRSSPTFSVHTQERRSPLGAVAPTDFGCQFGVPGTRRSPTSTVHVQDMATEPEEAGFVGLKRPSISLFTPIYFASEKRSPMGPIPPITVSNPAETYKSAEREREAAEAAAREKEKEKEKEAAQPQEKKSVMREILAFVRKPSKHLSSRTNRFANAFTRAESGSSGGPLIRQSTFSASPAASSTAAKSAVQKQMSEVGFEPKISQKFTHYAKMSLRLRRSTKRDDEEKEKQKQSSASGSKRPSADLSQTNADQQVGGSSDELPFELANVHFEKVGESYIKHERLRELQEPEVVKEEDTEKDAEAEVEVEQTDAAMAQFVEEVTNSLKVVALNGEGGTAAVHHFTRRSESREPIEPRISEERESDSNDLMIPDDMRAELVEILKAYPPEPVYVNLQALRRETEDADLAIAQAEAAALAAAEPAKKPLQCPTIEFEPPSRRSSFDPPRSPFLEQLRSPGVDTETDLINLQRLDSGGDSFELVESKWSKSSRGESSFDCPYSSRDTSFDVSISRYQSTSYEDQTSSFEIVDTDEKGQGRRAVDLRKSSIELVDAETFQRSGSSCGGRKSSLETHFDYTPTEGGGRSPSLPFPAMSKKQRTENFRQLHVSQFSAFSRARSPLSQQTSSNYSSRDSYDSSGSYPHGYGYPPEPQRSPYGDPSRKHFPLTVRQKGEEEREVRTFLCTDQRCASIFEPRPSSVLTQQLSTGSMSTPSGYTNGTPRIPGAAPVGPVPLPHPSAPLSSCGFSSGSEFEPPSPRRAASASPKHTFTFRIVMKKVDSSPEALCPERHRSRIIDRYRRRDSRRKRIHDAGKSF.

In terms of domain architecture, BTB spans 40–158 (CDVTFLVGDT…IHTGCVTLQP (119 aa)). Disordered stretches follow at residues 325-532 (SIDP…RSPT), 575-624 (PIPP…SVMR), 648-685 (FTRA…QKQM), 701-752 (YAKM…SSDE), 834-858 (FTRR…DSND), 1045-1090 (FQRS…RTEN), 1102-1163 (FSRA…GEEE), and 1187-1252 (VLTQ…SASP). Residues 337-364 (RQHHRHRHHHQSLPKIRKAKSQSFRTRR) show a composition bias toward basic residues. Composition is skewed to polar residues over residues 378–388 (LTLNTSLTSGN), 410–430 (SPGS…TLRA), 437–449 (SGQL…TQGR), and 472–487 (GLRS…TVRS). Residues 589 to 623 (KSAEREREAAEAAAREKEKEKEKEAAQPQEKKSVM) show a composition bias toward basic and acidic residues. Over residues 664–680 (STFSASPAASSTAAKSA) the composition is skewed to low complexity. Residues 713–723 (KRDDEEKEKQK) show a composition bias toward basic and acidic residues. A compositionally biased stretch (polar residues) spans 736 to 748 (DLSQTNADQQVGG). A compositionally biased stretch (basic and acidic residues) spans 836–855 (RRSESREPIEPRISEERESD). Low complexity-rich tracts occupy residues 1047–1056 (RSGSSCGGRK) and 1107–1128 (SPLS…SSGS). Residues 1187 to 1207 (VLTQQLSTGSMSTPSGYTNGT) are compositionally biased toward polar residues. Residues 1226-1252 (APLSSCGFSSGSEFEPPSPRRAASASP) show a composition bias toward low complexity.

The chain is Serine-enriched protein (gprs) from Drosophila melanogaster (Fruit fly).